Here is a 307-residue protein sequence, read N- to C-terminus: Protoheme IX farnesyltransferase (307 aa).

8 helical membrane-spanning segments follow: residues Asn-38 to Leu-58, Phe-65 to Ile-85, Pro-108 to Leu-128, Pro-131 to Trp-151, Leu-158 to Ile-178, Ile-186 to Ala-206, Leu-251 to Phe-271, and Phe-287 to Phe-307.

It belongs to the UbiA prenyltransferase family. Protoheme IX farnesyltransferase subfamily. As to quaternary structure, interacts with CtaA.

It is found in the cell membrane. The enzyme catalyses heme b + (2E,6E)-farnesyl diphosphate + H2O = Fe(II)-heme o + diphosphate. The protein operates within porphyrin-containing compound metabolism; heme O biosynthesis; heme O from protoheme: step 1/1. In terms of biological role, converts heme B (protoheme IX) to heme O by substitution of the vinyl group on carbon 2 of heme B porphyrin ring with a hydroxyethyl farnesyl side group. The polypeptide is Protoheme IX farnesyltransferase (Bacillus thuringiensis (strain Al Hakam)).